The following is a 100-amino-acid chain: Large ribosomal subunit protein uL23 (100 aa).

It belongs to the universal ribosomal protein uL23 family. As to quaternary structure, part of the 50S ribosomal subunit. Contacts protein L29, and trigger factor when it is bound to the ribosome.

One of the early assembly proteins it binds 23S rRNA. One of the proteins that surrounds the polypeptide exit tunnel on the outside of the ribosome. Forms the main docking site for trigger factor binding to the ribosome. The polypeptide is Large ribosomal subunit protein uL23 (Pasteurella multocida (strain Pm70)).